We begin with the raw amino-acid sequence, 204 residues long: Large ribosomal subunit protein bL17 (204 aa).

The disordered stretch occupies residues 124–204 (QAVGEAERAR…DDDGPAESKS (81 aa)). Over residues 128–142 (EAERARGTRFSERRK) the composition is skewed to basic and acidic residues. A compositionally biased stretch (low complexity) spans 156–191 (SESPTAAAVAAQSAEEQAPVEETLTAQAAETSAATV). A compositionally biased stretch (acidic residues) spans 192-204 (EETDDDGPAESKS).

It belongs to the bacterial ribosomal protein bL17 family. In terms of assembly, part of the 50S ribosomal subunit. Contacts protein L32.

The protein is Large ribosomal subunit protein bL17 of Frankia alni (strain DSM 45986 / CECT 9034 / ACN14a).